The primary structure comprises 268 residues: Hydroxyethylthiazole kinase (268 aa).

Methionine 45 provides a ligand contact to substrate. The ATP site is built by arginine 121 and threonine 167. Position 194 (glycine 194) interacts with substrate.

It belongs to the Thz kinase family. Mg(2+) is required as a cofactor.

It carries out the reaction 5-(2-hydroxyethyl)-4-methylthiazole + ATP = 4-methyl-5-(2-phosphooxyethyl)-thiazole + ADP + H(+). Its pathway is cofactor biosynthesis; thiamine diphosphate biosynthesis; 4-methyl-5-(2-phosphoethyl)-thiazole from 5-(2-hydroxyethyl)-4-methylthiazole: step 1/1. In terms of biological role, catalyzes the phosphorylation of the hydroxyl group of 4-methyl-5-beta-hydroxyethylthiazole (THZ). The protein is Hydroxyethylthiazole kinase of Bacillus cereus (strain Q1).